The primary structure comprises 327 residues: Phenylalanine--tRNA ligase alpha subunit (327 aa).

E252 is a binding site for Mg(2+).

The protein belongs to the class-II aminoacyl-tRNA synthetase family. Phe-tRNA synthetase alpha subunit type 1 subfamily. As to quaternary structure, tetramer of two alpha and two beta subunits. Mg(2+) is required as a cofactor.

It is found in the cytoplasm. The enzyme catalyses tRNA(Phe) + L-phenylalanine + ATP = L-phenylalanyl-tRNA(Phe) + AMP + diphosphate + H(+). This Yersinia pestis bv. Antiqua (strain Antiqua) protein is Phenylalanine--tRNA ligase alpha subunit.